The primary structure comprises 228 residues: PKHD-type hydroxylase XAC2942 (228 aa).

The 103-residue stretch at 78–180 (RIYPPLFNRY…RVACFFWAQS (103 aa)) folds into the Fe2OG dioxygenase domain. Residues histidine 96, aspartate 98, and histidine 161 each contribute to the Fe cation site. Arginine 171 lines the 2-oxoglutarate pocket.

Requires Fe(2+) as cofactor. L-ascorbate is required as a cofactor.

This is PKHD-type hydroxylase XAC2942 from Xanthomonas axonopodis pv. citri (strain 306).